A 259-amino-acid chain; its full sequence is Phosphatidylserine decarboxylase proenzyme (259 aa).

Catalysis depends on charge relay system; for autoendoproteolytic cleavage activity residues Asp-86, His-142, and Ser-226. The active-site Schiff-base intermediate with substrate; via pyruvic acid; for decarboxylase activity is Ser-226. The residue at position 226 (Ser-226) is a Pyruvic acid (Ser); by autocatalysis.

This sequence belongs to the phosphatidylserine decarboxylase family. PSD-B subfamily. Prokaryotic type I sub-subfamily. Heterodimer of a large membrane-associated beta subunit and a small pyruvoyl-containing alpha subunit. Pyruvate serves as cofactor. Is synthesized initially as an inactive proenzyme. Formation of the active enzyme involves a self-maturation process in which the active site pyruvoyl group is generated from an internal serine residue via an autocatalytic post-translational modification. Two non-identical subunits are generated from the proenzyme in this reaction, and the pyruvate is formed at the N-terminus of the alpha chain, which is derived from the carboxyl end of the proenzyme. The autoendoproteolytic cleavage occurs by a canonical serine protease mechanism, in which the side chain hydroxyl group of the serine supplies its oxygen atom to form the C-terminus of the beta chain, while the remainder of the serine residue undergoes an oxidative deamination to produce ammonia and the pyruvoyl prosthetic group on the alpha chain. During this reaction, the Ser that is part of the protease active site of the proenzyme becomes the pyruvoyl prosthetic group, which constitutes an essential element of the active site of the mature decarboxylase.

The protein resides in the cell membrane. It carries out the reaction a 1,2-diacyl-sn-glycero-3-phospho-L-serine + H(+) = a 1,2-diacyl-sn-glycero-3-phosphoethanolamine + CO2. The protein operates within phospholipid metabolism; phosphatidylethanolamine biosynthesis; phosphatidylethanolamine from CDP-diacylglycerol: step 2/2. Catalyzes the formation of phosphatidylethanolamine (PtdEtn) from phosphatidylserine (PtdSer). The sequence is that of Phosphatidylserine decarboxylase proenzyme from Halalkalibacterium halodurans (strain ATCC BAA-125 / DSM 18197 / FERM 7344 / JCM 9153 / C-125) (Bacillus halodurans).